Here is a 388-residue protein sequence, read N- to C-terminus: Succinate--CoA ligase [ADP-forming] subunit beta (388 aa).

Residues 9 to 244 form the ATP-grasp domain; that stretch reads KEILRKYGVT…LDEEDPAEIE (236 aa). Residues lysine 46, 53–55, glutamate 99, alanine 102, and glutamate 107 contribute to the ATP site; that span reads GRG. Residues asparagine 199 and aspartate 213 each coordinate Mg(2+). Substrate-binding positions include asparagine 264 and 321–323; that span reads GIM.

It belongs to the succinate/malate CoA ligase beta subunit family. As to quaternary structure, heterotetramer of two alpha and two beta subunits. The cofactor is Mg(2+).

It catalyses the reaction succinate + ATP + CoA = succinyl-CoA + ADP + phosphate. It carries out the reaction GTP + succinate + CoA = succinyl-CoA + GDP + phosphate. It participates in carbohydrate metabolism; tricarboxylic acid cycle; succinate from succinyl-CoA (ligase route): step 1/1. In terms of biological role, succinyl-CoA synthetase functions in the citric acid cycle (TCA), coupling the hydrolysis of succinyl-CoA to the synthesis of either ATP or GTP and thus represents the only step of substrate-level phosphorylation in the TCA. The beta subunit provides nucleotide specificity of the enzyme and binds the substrate succinate, while the binding sites for coenzyme A and phosphate are found in the alpha subunit. In Herminiimonas arsenicoxydans, this protein is Succinate--CoA ligase [ADP-forming] subunit beta.